Reading from the N-terminus, the 252-residue chain is Fructose-1,6-bisphosphatase/inositol-1-monophosphatase (252 aa).

Glu-65, Asp-81, Ile-83, and Asp-84 together coordinate Mg(2+). Residues 84-86 (DGS), Arg-170, Phe-175, and Arg-194 contribute to the substrate site. Asp-201 provides a ligand contact to Mg(2+).

Belongs to the inositol monophosphatase superfamily. FBPase class 4 family. Homodimer. Mg(2+) serves as cofactor.

The enzyme catalyses beta-D-fructose 1,6-bisphosphate + H2O = beta-D-fructose 6-phosphate + phosphate. It carries out the reaction a myo-inositol phosphate + H2O = myo-inositol + phosphate. With respect to regulation, IMPase activity is inhibited by Ca(2+) and Zn(2+). In contrast to mammalian I-1-P phosphatases, is not inhibited by Li(+) up to 100 mM. Functionally, phosphatase with broad specificity; it can dephosphorylate fructose 1,6-bisphosphate, both D and L isomers of inositol-1-phosphate (I-1-P), 2'-AMP, pNPP, beta-glycerol phosphate, and alpha-D-glucose-1-phosphate. Cannot hydrolyze glucose-6-phosphate, fructose-6-phosphate, NAD(+) or 5'-AMP. May be involved in the biosynthesis of a unique osmolyte, di-myo-inositol 1,1-phosphate. In Methanocaldococcus jannaschii (strain ATCC 43067 / DSM 2661 / JAL-1 / JCM 10045 / NBRC 100440) (Methanococcus jannaschii), this protein is Fructose-1,6-bisphosphatase/inositol-1-monophosphatase (suhB).